The following is a 398-amino-acid chain: Calcium-binding and coiled-coil domain-containing protein 2 (398 aa).

Residues 133 to 136 (ILVV) carry the CLIR motif. Residues 137–301 (TTQGEVEEIE…RENSRLLSYM (165 aa)) adopt a coiled-coil conformation. The LIR-like signature appears at 203-206 (DYWE). The disordered stretch occupies residues 314 to 341 (TSDEGGAGQNPGLVYGNPYSGIQESSSP). The interval 323–333 (NPGLVYGNPYS) is interaction with LGALS8. An interaction with MYO6 region spans residues 347–398 (KKCPICKADDICDHTLEQQQMQALCLNCPICDKIFPATEKQIFEDHVFCHSL). The UBZ1-type zinc-finger motif lies at 371 to 396 (CLNCPICDKIFPATEKQIFEDHVFCH). Zn(2+) is bound by residues cysteine 374, cysteine 377, histidine 392, and histidine 396. Position 397 is a phosphoserine (serine 397).

This sequence belongs to the CALCOCO family. Dimer. Part of a complex consisting of CALCOCO2, TAX1BP1 and MYO6. Interacts with MYO6. Interacts with GEMIN4. Interacts with ATG8 family members MAP1LC3A, MAP1LC3B, GABARAP, GABARAPL1 and GABARAPL2. Interacts with ATG8 family member MAP1LC3C. Interacts with LGALS8. Interacts with TOM1; the interaction is indirect and is mediated by MYO6, which acts as a bridge between TOM1 and CALCOCO2. Interacts with AZI2.

It localises to the cytoplasm. The protein resides in the perinuclear region. Its subcellular location is the cytoskeleton. The protein localises to the cytoplasmic vesicle. It is found in the autophagosome membrane. Its function is as follows. Xenophagy-specific receptor required for autophagy-mediated intracellular bacteria degradation. Acts as an effector protein of galectin-sensed membrane damage that restricts the proliferation of infecting pathogens upon entry into the cytosol by targeting LGALS8-associated bacteria for autophagy. Initially orchestrates bacteria targeting to autophagosomes and subsequently ensures pathogen degradation by regulating pathogen-containing autophagosome maturation. Bacteria targeting to autophagosomes relies on its interaction with MAP1LC3A, MAP1LC3B and/or GABARAPL2, whereas regulation of pathogen-containing autophagosome maturation requires the interaction with MAP3LC3C. May play a role in ruffle formation and actin cytoskeleton organization and seems to negatively regulate constitutive secretion. The polypeptide is Calcium-binding and coiled-coil domain-containing protein 2 (Macaca fascicularis (Crab-eating macaque)).